The chain runs to 920 residues: MAGKARVHELAKELGVTSKELLATLKEQGEFVKSASSTVEAPVARRLREKFGSKSAPAPAKSAGNGATAAPATSATPATAAAAAAPAPAPAPQAPAKPAAPKPAAPQPVAPPQPAAAAPTPPPAASAPAPAPAPSAPAPSRPGPTPGPRPGPAPKPAPRTPRVGNNPFSTQQPVDRPIPRPQPRPGAPRPGTPRPGMSPNNMPPRPAGPRPGAPAGRPGGPRPGPGGRGPGGGGGRPGGPGGGGGGNYRGGGAGGGGGAGGAAAGGFRGRPGGGGRPGQRGGAAGAFGRPGGAPKRGRKSKRAKRAEYENMQAPVVGGVRLPHGNGETIRLARGASLSDFAEKINANPASLVQALFNLGEMVTATQSVNDETLELLGSEMNYVVQVVSPEDEDRELLESFDLSYGEDAGDEGDLEIRPPVVTVMGHVDHGKTRLLDTIRQANVREGEAGGITQHIGAYQVLTELDGNERLITFIDTPGHEAFTAMRARGAKATDIAILVVAADDGVMPQTVEAINHAQAADVPVVVAVNKIDKEGADPQKIRGQLTEYGLIPEEYGGDTMFVDISAKQGTNIDALLEAVLLTADASLDLRANPDMEAQGVAIEAHLDRGRGPVATVLIQRGTLRVGDSIVAGDAYGRVRRMVDEHGEDVEAAMPSRPVQVIGFTSVPGAGDNLLVVDEDRIARQIADRRSARKRNALAARSRKRISLEDLDSALKETSQLNLILKGDNAGTVEALEEALLGIQVDDEVELRVIDRGVGGVTETNVNLASASDAIIIGFNVRAEGKATELANREGVEIRYYSVIYQAIDEIESALKGMLKPVYEEKELGRAEIRAIFRSSKVGNIAGCLVQSGIMRRNAKARLLRDNVVVAENLTVSSLRREKEDVTEVRDGYECGLTLTYSDIKEGDVIETYELVEKART.

Positions Lys-33–Arg-305 are disordered. The segment covering Ser-53–Pro-86 has biased composition (low complexity). Pro residues-rich tracts occupy residues Ala-87–Arg-159, Pro-179–Pro-193, and Asn-201–Gly-212. Residues Pro-225–Gly-291 are compositionally biased toward gly residues. Residues Lys-295–Lys-304 are compositionally biased toward basic residues. The tr-type G domain maps to Ile-416–Asp-588. The segment at Gly-425–Thr-432 is G1. A GTP-binding site is contributed by Gly-425 to Thr-432. The tract at residues Gly-450–His-454 is G2. Residues Asp-475–Gly-478 are G3. GTP is bound by residues Asp-475–His-479 and Asn-529–Asp-532. A G4 region spans residues Asn-529–Asp-532. The G5 stretch occupies residues Ser-565–Lys-567.

This sequence belongs to the TRAFAC class translation factor GTPase superfamily. Classic translation factor GTPase family. IF-2 subfamily.

The protein resides in the cytoplasm. In terms of biological role, one of the essential components for the initiation of protein synthesis. Protects formylmethionyl-tRNA from spontaneous hydrolysis and promotes its binding to the 30S ribosomal subunits. Also involved in the hydrolysis of GTP during the formation of the 70S ribosomal complex. The sequence is that of Translation initiation factor IF-2 from Mycobacterium sp. (strain JLS).